Here is a 165-residue protein sequence, read N- to C-terminus: MTSLESSYLDVVAFIFREARLLDDRSWDEWLECYDPEAVFWMPCWDDADTLVDDPRKHVSLIYYSDRMGLEDRVFRLRSERSGASTPEPRTTHNIANVEILERTERQIEARFNWHTMNYRYKLLDHYFGTSFYTLKVSSSGLSILNKKVVLKNDLIHQVIDVYHV.

This sequence belongs to the bacterial ring-hydroxylating dioxygenase beta subunit family. As to quaternary structure, heterohexamer of 3 large (CbdA) subunits and 3 small (CbdB) subunits. The heterohexamer is part of 2-halobenzoate dioxygenase two component enzyme system. The other component is a NADH:acceptor reductase (CdbC).

The catalysed reaction is a 2-halobenzoate + NADH + O2 + H(+) = a halide anion + catechol + CO2 + NAD(+). The protein operates within xenobiotic degradation; benzoate degradation via CoA ligation. Its function is as follows. Component of 2-halobenzoate dioxygenase multicomponent enzyme system which catalyzes the incorporation of both atoms of molecular oxygen into 2-halobenzoate to form catechol. The sequence is that of 2-halobenzoate 1,2-dioxygenase small subunit (cbdB) from Burkholderia cepacia (Pseudomonas cepacia).